The chain runs to 186 residues: Negative modulator of initiation of replication (186 aa).

Belongs to the SeqA family. As to quaternary structure, homodimer. Polymerizes to form helical filaments.

Its subcellular location is the cytoplasm. In terms of biological role, negative regulator of replication initiation, which contributes to regulation of DNA replication and ensures that replication initiation occurs exactly once per chromosome per cell cycle. Binds to pairs of hemimethylated GATC sequences in the oriC region, thus preventing assembly of replication proteins and re-initiation at newly replicated origins. Repression is relieved when the region becomes fully methylated. The protein is Negative modulator of initiation of replication of Glaesserella parasuis serovar 5 (strain SH0165) (Haemophilus parasuis).